Here is a 193-residue protein sequence, read N- to C-terminus: MRLCDRDIEAWLDEGRLSINPRPPVERINGATVDVRLGNKFRTFRGHTAAFIDLSGPKDEVSAALDRVMSDEIVLDEGDAFYLHPGELALAVTFESVTLPPDLVGWLDGRSSLARLGLMVHVTAHRIDPGWSGCIVLEFYNSGKLPLALRPGMLIGALSFEPLSGPAARPYNRRQDAKYRDQQGAVASRIDKD.

DCTP contacts are provided by residues 110 to 115 (RSSLAR), Asp128, 136 to 138 (VLE), Tyr171, Lys178, and Gln182. The Proton donor/acceptor role is filled by Glu138. The interval 169–193 (RPYNRRQDAKYRDQQGAVASRIDKD) is disordered.

It belongs to the dCTP deaminase family. As to quaternary structure, homotrimer.

It catalyses the reaction dCTP + H2O + H(+) = dUTP + NH4(+). The protein operates within pyrimidine metabolism; dUMP biosynthesis; dUMP from dCTP (dUTP route): step 1/2. In terms of biological role, catalyzes the deamination of dCTP to dUTP. In Citrobacter koseri (strain ATCC BAA-895 / CDC 4225-83 / SGSC4696), this protein is dCTP deaminase.